We begin with the raw amino-acid sequence, 407 residues long: Peptidase T (407 aa).

H82 contacts Zn(2+). The active site involves D84. Zn(2+) is bound at residue D143. The active-site Proton acceptor is E177. The Zn(2+) site is built by E178, D200, and H382.

This sequence belongs to the peptidase M20B family. Zn(2+) serves as cofactor.

Its subcellular location is the cytoplasm. It carries out the reaction Release of the N-terminal residue from a tripeptide.. In terms of biological role, cleaves the N-terminal amino acid of tripeptides. This Streptococcus pyogenes serotype M4 (strain MGAS10750) protein is Peptidase T.